The primary structure comprises 719 residues: Exonuclease mut-7 homolog (719 aa).

The interval 1–22 is disordered; that stretch reads MSKSNNVAPPCRQDQLGFVPAG. The 55-residue stretch at 575–629 folds into the 3'-5' exonuclease domain; the sequence is NLANLVRLCLGKKLDKSNQFSNWAQRPLRKEQLRYAALDAFCLLEIYDAIEKQLT. The tract at residues 644–719 is disordered; the sequence is NDVRPPSDSG…FEGPNTKSVL (76 aa). Residues 667 to 678 show a composition bias toward basic residues; that stretch reads RRNHRDKYNKRH. 2 stretches are compositionally biased toward polar residues: residues 683 to 692 and 706 to 719; these read DSNSGNSSRA and EQQT…KSVL.

This sequence belongs to the mut-7 family. It depends on Mg(2+) as a cofactor.

In terms of biological role, possesses 3'-5' exoribonuclease activity. Required for 3'-end trimming of AGO1-bound miRNAs. The protein is Exonuclease mut-7 homolog of Aedes aegypti (Yellowfever mosquito).